Here is a 213-residue protein sequence, read N- to C-terminus: N-(5'-phosphoribosyl)anthranilate isomerase (213 aa).

It belongs to the TrpF family.

It catalyses the reaction N-(5-phospho-beta-D-ribosyl)anthranilate = 1-(2-carboxyphenylamino)-1-deoxy-D-ribulose 5-phosphate. Its pathway is amino-acid biosynthesis; L-tryptophan biosynthesis; L-tryptophan from chorismate: step 3/5. In Roseiflexus sp. (strain RS-1), this protein is N-(5'-phosphoribosyl)anthranilate isomerase.